The sequence spans 293 residues: 33 kDa chaperonin (293 aa).

2 cysteine pairs are disulfide-bonded: Cys235/Cys237 and Cys267/Cys270.

Belongs to the HSP33 family. Post-translationally, under oxidizing conditions two disulfide bonds are formed involving the reactive cysteines. Under reducing conditions zinc is bound to the reactive cysteines and the protein is inactive.

The protein resides in the cytoplasm. Functionally, redox regulated molecular chaperone. Protects both thermally unfolding and oxidatively damaged proteins from irreversible aggregation. Plays an important role in the bacterial defense system toward oxidative stress. The polypeptide is 33 kDa chaperonin (Deinococcus radiodurans (strain ATCC 13939 / DSM 20539 / JCM 16871 / CCUG 27074 / LMG 4051 / NBRC 15346 / NCIMB 9279 / VKM B-1422 / R1)).